We begin with the raw amino-acid sequence, 458 residues long: Cysteine--tRNA ligase (458 aa).

Zn(2+) is bound at residue cysteine 29. Positions methionine 31 to histidine 41 match the 'HIGH' region motif. Positions 213, 238, and 242 each coordinate Zn(2+). Residues lysine 270 to serine 274 carry the 'KMSKS' region motif. Lysine 273 serves as a coordination point for ATP.

The protein belongs to the class-I aminoacyl-tRNA synthetase family. Monomer. Zn(2+) serves as cofactor.

The protein localises to the cytoplasm. The catalysed reaction is tRNA(Cys) + L-cysteine + ATP = L-cysteinyl-tRNA(Cys) + AMP + diphosphate. In Acidovorax sp. (strain JS42), this protein is Cysteine--tRNA ligase.